The sequence spans 136 residues: ATP synthase F(0) complex subunit C1, mitochondrial (136 aa).

The N-terminal 61 residues, 1-61, are a transit peptide targeting the mitochondrion; sequence MQTTGALLIS…REFQTSVVSR (61 aa). A helical transmembrane segment spans residues 77 to 97; it reads VGVAGSGAGIGTVFGSLIIGY. Position 104 is an N6,N6,N6-trimethyllysine (K104). The helical transmembrane segment at 112–132 threads the bilayer; it reads ILGFALFEAMGLFCLMVAFLI.

Belongs to the ATPase C chain family. In terms of assembly, homooctamer; the c-ring consists of eight c subunits forming a circle, and each subunit adopts a hairpin shape. Component of the ATP synthase complex composed at least of ATP5F1A/subunit alpha, ATP5F1B/subunit beta, ATP5MC1/subunit c (homooctomer), MT-ATP6/subunit a, MT-ATP8/subunit 8, ATP5ME/subunit e, ATP5MF/subunit f, ATP5MG/subunit g, ATP5MK/subunit k, ATP5MJ/subunit j, ATP5F1C/subunit gamma, ATP5F1D/subunit delta, ATP5F1E/subunit epsilon, ATP5PF/subunit F6, ATP5PB/subunit b, ATP5PD/subunit d, ATP5PO/subunit OSCP. ATP synthase complex consists of a soluble F(1) head domain (subunits alpha(3) and beta(3)) - the catalytic core - and a membrane F(0) domain - the membrane proton channel (subunits c, a, 8, e, f, g, k and j). These two domains are linked by a central stalk (subunits gamma, delta, and epsilon) rotating inside the F1 region and a stationary peripheral stalk (subunits F6, b, d, and OSCP). Interacts with TMEM70 (homooligomer form); this interaction facilitates the oligomer formation of subunit c/ATP5MC1 (c-ring) and the c-ring membrane insertion and also protects ATP5MC1 against intramitochondrial proteolysis. Post-translationally, trimethylated by ATPSCKMT at Lys-104. Methylation is required for proper incorporation of the C subunit into the ATP synthase complex and mitochondrial respiration.

The protein localises to the mitochondrion membrane. The enzyme catalyses H(+)(in) = H(+)(out). Functionally, subunit c, of the mitochondrial membrane ATP synthase complex (F(1)F(0) ATP synthase or Complex V) that produces ATP from ADP in the presence of a proton gradient across the membrane which is generated by electron transport complexes of the respiratory chain. ATP synthase complex consist of a soluble F(1) head domain - the catalytic core - and a membrane F(1) domain - the membrane proton channel. These two domains are linked by a central stalk rotating inside the F(1) region and a stationary peripheral stalk. During catalysis, ATP synthesis in the catalytic domain of F(1) is coupled via a rotary mechanism of the central stalk subunits to proton translocation. With the subunit a (MT-ATP6), forms the proton-conducting channel in the F(0) domain, that contains two crucial half-channels (inlet and outlet) that facilitate proton movement from the mitochondrial intermembrane space (IMS) into the matrix. Protons are taken up via the inlet half-channel and released through the outlet half-channel, following a Grotthuss mechanism. In Sus scrofa (Pig), this protein is ATP synthase F(0) complex subunit C1, mitochondrial.